The sequence spans 488 residues: ATP synthase subunit beta (488 aa).

Residue 164–171 (GGAGVGKT) participates in ATP binding.

This sequence belongs to the ATPase alpha/beta chains family. As to quaternary structure, F-type ATPases have 2 components, CF(1) - the catalytic core - and CF(0) - the membrane proton channel. CF(1) has five subunits: alpha(3), beta(3), gamma(1), delta(1), epsilon(1). CF(0) has four main subunits: a(1), b(1), b'(1) and c(9-12).

It is found in the cellular thylakoid membrane. The enzyme catalyses ATP + H2O + 4 H(+)(in) = ADP + phosphate + 5 H(+)(out). Produces ATP from ADP in the presence of a proton gradient across the membrane. The catalytic sites are hosted primarily by the beta subunits. This chain is ATP synthase subunit beta, found in Prochlorococcus marinus (strain MIT 9211).